Here is a 259-residue protein sequence, read N- to C-terminus: Cytochrome c oxidase subunit 3 (259 aa).

A run of 7 helical transmembrane segments spans residues 13 to 33 (PWPLTSSIGAFTLAIGLASWF), 36 to 56 (HGFLCLTLAAFLIIVSMIQWW), 80 to 100 (GMILFITSEVMFFLAFFWAFF), 125 to 145 (FSVPLLNTAVLLASGVTVTWA), 160 to 180 (ALILTVCLGAYFTFLQAGEYM), 195 to 215 (FFVATGFHGLHVLIGSSFLAI), and 237 to 257 (AWYWHFVDVVWICLYLCIYWW).

The protein belongs to the cytochrome c oxidase subunit 3 family. In terms of assembly, component of the cytochrome c oxidase (complex IV, CIV), a multisubunit enzyme composed of a catalytic core of 3 subunits and several supernumerary subunits. The complex exists as a monomer or a dimer and forms supercomplexes (SCs) in the inner mitochondrial membrane with ubiquinol-cytochrome c oxidoreductase (cytochrome b-c1 complex, complex III, CIII).

Its subcellular location is the mitochondrion inner membrane. It carries out the reaction 4 Fe(II)-[cytochrome c] + O2 + 8 H(+)(in) = 4 Fe(III)-[cytochrome c] + 2 H2O + 4 H(+)(out). Functionally, component of the cytochrome c oxidase, the last enzyme in the mitochondrial electron transport chain which drives oxidative phosphorylation. The respiratory chain contains 3 multisubunit complexes succinate dehydrogenase (complex II, CII), ubiquinol-cytochrome c oxidoreductase (cytochrome b-c1 complex, complex III, CIII) and cytochrome c oxidase (complex IV, CIV), that cooperate to transfer electrons derived from NADH and succinate to molecular oxygen, creating an electrochemical gradient over the inner membrane that drives transmembrane transport and the ATP synthase. Cytochrome c oxidase is the component of the respiratory chain that catalyzes the reduction of oxygen to water. Electrons originating from reduced cytochrome c in the intermembrane space (IMS) are transferred via the dinuclear copper A center (CU(A)) of subunit 2 and heme A of subunit 1 to the active site in subunit 1, a binuclear center (BNC) formed by heme A3 and copper B (CU(B)). The BNC reduces molecular oxygen to 2 water molecules using 4 electrons from cytochrome c in the IMS and 4 protons from the mitochondrial matrix. The protein is Cytochrome c oxidase subunit 3 (COIII) of Lumbricus terrestris (Common earthworm).